Consider the following 118-residue polypeptide: Large ribosomal subunit protein bL20 (118 aa).

It belongs to the bacterial ribosomal protein bL20 family.

Binds directly to 23S ribosomal RNA and is necessary for the in vitro assembly process of the 50S ribosomal subunit. It is not involved in the protein synthesizing functions of that subunit. The protein is Large ribosomal subunit protein bL20 of Campylobacter concisus (strain 13826).